We begin with the raw amino-acid sequence, 227 residues long: 7-cyano-7-deazaguanine synthase (227 aa).

16–26 (FSGGQDSTTCL) serves as a coordination point for ATP. Zn(2+)-binding residues include C194, C202, C205, and C208.

The protein belongs to the QueC family. Zn(2+) is required as a cofactor.

The catalysed reaction is 7-carboxy-7-deazaguanine + NH4(+) + ATP = 7-cyano-7-deazaguanine + ADP + phosphate + H2O + H(+). It participates in purine metabolism; 7-cyano-7-deazaguanine biosynthesis. Its function is as follows. Catalyzes the ATP-dependent conversion of 7-carboxy-7-deazaguanine (CDG) to 7-cyano-7-deazaguanine (preQ(0)). The chain is 7-cyano-7-deazaguanine synthase from Haemophilus influenzae (strain 86-028NP).